The following is a 301-amino-acid chain: Ribosomal RNA small subunit methyltransferase A (301 aa).

6 residues coordinate S-adenosyl-L-methionine: N29, L31, G56, E77, D102, and N127.

This sequence belongs to the class I-like SAM-binding methyltransferase superfamily. rRNA adenine N(6)-methyltransferase family. RsmA subfamily.

Its subcellular location is the cytoplasm. The enzyme catalyses adenosine(1518)/adenosine(1519) in 16S rRNA + 4 S-adenosyl-L-methionine = N(6)-dimethyladenosine(1518)/N(6)-dimethyladenosine(1519) in 16S rRNA + 4 S-adenosyl-L-homocysteine + 4 H(+). Functionally, specifically dimethylates two adjacent adenosines (A1518 and A1519) in the loop of a conserved hairpin near the 3'-end of 16S rRNA in the 30S particle. May play a critical role in biogenesis of 30S subunits. The chain is Ribosomal RNA small subunit methyltransferase A from Halothermothrix orenii (strain H 168 / OCM 544 / DSM 9562).